The following is a 1386-amino-acid chain: Lysophospholipase NTE1 (1386 aa).

The Cytoplasmic portion of the chain corresponds to 1-19 (MGPEFEDSIPLVHSDNRTT). The helical transmembrane segment at 20-40 (TIYSVYIIISDIFSFVQWLLF) threads the bilayer. Residues 41–65 (KVLNLIIIDSPAFVLRLLSKNFEIN) are Lumenal-facing. Residues 66 to 86 (LHLSSILATLIGVSVVTYLVI) form a helical membrane-spanning segment. Residues 87–1386 (RYKFLTGYSH…KKILYRRNSI (1300 aa)) lie on the Cytoplasmic side of the membrane. A disordered region spans residues 394–416 (EAEAENLPKKLKHHHRNQLQRTT). Positions 402 to 411 (KKLKHHHRNQ) are enriched in basic residues. A nucleoside 3',5'-cyclic phosphate contacts are provided by residues 577-701 (KRLL…LKNL) and 697-821 (KLKN…VASK). In terms of domain architecture, PNPLA spans 1081–1245 (LVLGGGGSRG…LDNLPVNEMK (165 aa)). A GXGXXG motif is present at residues 1085–1090 (GGGSRG). The GXSXG motif lies at 1112–1116 (GTSIG). The active-site Nucleophile is S1114. The Proton acceptor role is filled by D1232. A DGA/G motif is present at residues 1232–1234 (DGG).

This sequence belongs to the NTE family.

It is found in the endoplasmic reticulum membrane. The catalysed reaction is a 1-acyl-sn-glycero-3-phosphocholine + H2O = sn-glycerol 3-phosphocholine + a fatty acid + H(+). Inhibited by organophosphorus esters. Its function is as follows. Intracellular phospholipase B that catalyzes the double deacylation of phosphatidylcholine (PC) to glycerophosphocholine (GroPCho). Plays an important role in membrane lipid homeostasis. Responsible for the rapid PC turnover in response to inositol, elevated temperatures, or when choline is present in the growth medium. In Candida albicans (strain SC5314 / ATCC MYA-2876) (Yeast), this protein is Lysophospholipase NTE1 (NTE1).